A 194-amino-acid chain; its full sequence is Putative 3-methyladenine DNA glycosylase (194 aa).

This sequence belongs to the DNA glycosylase MPG family.

The sequence is that of Putative 3-methyladenine DNA glycosylase from Myxococcus xanthus (strain DK1622).